Reading from the N-terminus, the 185-residue chain is Peptidyl-tRNA hydrolase (185 aa).

Tyrosine 14 contacts tRNA. The active-site Proton acceptor is the histidine 19. TRNA is bound by residues tyrosine 64, asparagine 66, and asparagine 112.

Belongs to the PTH family. As to quaternary structure, monomer.

The protein localises to the cytoplasm. The catalysed reaction is an N-acyl-L-alpha-aminoacyl-tRNA + H2O = an N-acyl-L-amino acid + a tRNA + H(+). Its function is as follows. Hydrolyzes ribosome-free peptidyl-tRNAs (with 1 or more amino acids incorporated), which drop off the ribosome during protein synthesis, or as a result of ribosome stalling. Catalyzes the release of premature peptidyl moieties from peptidyl-tRNA molecules trapped in stalled 50S ribosomal subunits, and thus maintains levels of free tRNAs and 50S ribosomes. The chain is Peptidyl-tRNA hydrolase from Exiguobacterium sibiricum (strain DSM 17290 / CCUG 55495 / CIP 109462 / JCM 13490 / 255-15).